Here is a 407-residue protein sequence, read N- to C-terminus: Phosphopentomutase (407 aa).

Mn(2+) contacts are provided by D10, D306, H311, D347, H348, and H359.

This sequence belongs to the phosphopentomutase family. Mn(2+) serves as cofactor.

The protein resides in the cytoplasm. The catalysed reaction is 2-deoxy-alpha-D-ribose 1-phosphate = 2-deoxy-D-ribose 5-phosphate. The enzyme catalyses alpha-D-ribose 1-phosphate = D-ribose 5-phosphate. Its pathway is carbohydrate degradation; 2-deoxy-D-ribose 1-phosphate degradation; D-glyceraldehyde 3-phosphate and acetaldehyde from 2-deoxy-alpha-D-ribose 1-phosphate: step 1/2. Its function is as follows. Isomerase that catalyzes the conversion of deoxy-ribose 1-phosphate (dRib-1-P) and ribose 1-phosphate (Rib-1-P) to deoxy-ribose 5-phosphate (dRib-5-P) and ribose 5-phosphate (Rib-5-P), respectively. This chain is Phosphopentomutase, found in Yersinia pestis bv. Antiqua (strain Angola).